Consider the following 519-residue polypeptide: GATA zinc finger domain-containing protein 8 (519 aa).

Disordered stretches follow at residues 25 to 182 (YSTG…SSSG), 198 to 249 (SNIN…SNNT), 273 to 359 (SNNM…NNKQ), and 431 to 453 (DERQ…KRRE). Low complexity predominate over residues 37–156 (TNNSQNKTNN…SSSITSPSSN (120 aa)). Over residues 172-182 (SPNNKQVSSSG) the composition is skewed to polar residues. Low complexity predominate over residues 273 to 357 (SNNMNINNQH…SNINNNNNNN (85 aa)). A coiled-coil region spans residues 429-461 (KTDERQQKKRMESDKNAEKREKRREASRLLNNV). Residues 462-487 (CRNCKTTETPEWRKGPDGTKSLCNAC) form a GATA-type zinc finger.

The polypeptide is GATA zinc finger domain-containing protein 8 (gtaH) (Dictyostelium discoideum (Social amoeba)).